A 261-amino-acid polypeptide reads, in one-letter code: Phosphatidylglycerol--prolipoprotein diacylglyceryl transferase (261 aa).

Transmembrane regions (helical) follow at residues leucine 13–isoleucine 33, valine 50–tyrosine 70, tryptophan 86–phenylalanine 106, and isoleucine 112–glycine 132. An a 1,2-diacyl-sn-glycero-3-phospho-(1'-sn-glycerol)-binding site is contributed by arginine 133. A run of 3 helical transmembrane segments spans residues leucine 169–phenylalanine 189, glycine 197–valine 217, and isoleucine 232–leucine 252.

Belongs to the Lgt family.

Its subcellular location is the cell inner membrane. It carries out the reaction L-cysteinyl-[prolipoprotein] + a 1,2-diacyl-sn-glycero-3-phospho-(1'-sn-glycerol) = an S-1,2-diacyl-sn-glyceryl-L-cysteinyl-[prolipoprotein] + sn-glycerol 1-phosphate + H(+). The protein operates within protein modification; lipoprotein biosynthesis (diacylglyceryl transfer). Catalyzes the transfer of the diacylglyceryl group from phosphatidylglycerol to the sulfhydryl group of the N-terminal cysteine of a prolipoprotein, the first step in the formation of mature lipoproteins. The chain is Phosphatidylglycerol--prolipoprotein diacylglyceryl transferase from Ehrlichia canis (strain Jake).